An 894-amino-acid polypeptide reads, in one-letter code: Desmocollin-1 (894 aa).

The N-terminal stretch at 1-29 (MALASAAPGSIFCKQLLFSLLVLTLLCDA) is a signal peptide. Positions 30-134 (CQKVYLRVPS…KDTALKRSKR (105 aa)) are excised as a propeptide. Cadherin domains follow at residues 135–242 (RWAP…APYF), 243–354 (EHRV…PPSF), 355–471 (TETS…GPEC), 472–575 (HPPV…DHAP), and 576–682 (QIDK…STRD). At 135 to 691 (RWAPIPASLM…DVRPNVILGR (557 aa)) the chain is on the extracellular side. Asn-165 carries N-linked (GlcNAc...) asparagine glycosylation. Residue Thr-385 is modified to Phosphothreonine. An N-linked (GlcNAc...) asparagine glycan is attached at Asn-546. Residues 692-714 (WAILAMVLGSVLLLCILFTCFCV) form a helical membrane-spanning segment. Residues 715–894 (TAKRTVKKCF…RTLAKTCIKK (180 aa)) are Cytoplasmic-facing.

In terms of assembly, binds to JUP/plakoglobin. As to expression, strongly expressed in epidermis, less in lymph node and tongue.

The protein resides in the cell membrane. It localises to the cell junction. It is found in the desmosome. A component of desmosome cell-cell junctions which are required for positive regulation of cellular adhesion. Required for desmosome adhesion strength between the granular layers of the epidermis, as a result moderates epidermal proliferation and differentiation. Is therefore required to maintain postnatal epidermal barrier function and normal hair follicle morphology into adulthood. This is Desmocollin-1 (DSC1) from Homo sapiens (Human).